Here is a 729-residue protein sequence, read N- to C-terminus: Fatty acid oxidation complex subunit alpha (729 aa).

The segment at 1–189 (MLYKGDTLYL…KIGLVDGVVK (189 aa)) is enoyl-CoA hydratase/isomerase. Residue aspartate 296 participates in substrate binding. The tract at residues 311 to 729 (ETPKQAAVLG…ARPVGDLKTA (419 aa)) is 3-hydroxyacyl-CoA dehydrogenase. NAD(+) is bound by residues methionine 324, aspartate 343, 400 to 402 (VVE), lysine 407, and serine 429. Histidine 450 serves as the catalytic For 3-hydroxyacyl-CoA dehydrogenase activity. Asparagine 453 is an NAD(+) binding site. Asparagine 500 and tyrosine 660 together coordinate substrate. A disordered region spans residues 708 to 729 (RHNEPYYPPVEPARPVGDLKTA).

In the N-terminal section; belongs to the enoyl-CoA hydratase/isomerase family. It in the C-terminal section; belongs to the 3-hydroxyacyl-CoA dehydrogenase family. In terms of assembly, heterotetramer of two alpha chains (FadB) and two beta chains (FadA).

It catalyses the reaction a (3S)-3-hydroxyacyl-CoA + NAD(+) = a 3-oxoacyl-CoA + NADH + H(+). The enzyme catalyses a (3S)-3-hydroxyacyl-CoA = a (2E)-enoyl-CoA + H2O. It carries out the reaction a 4-saturated-(3S)-3-hydroxyacyl-CoA = a (3E)-enoyl-CoA + H2O. The catalysed reaction is (3S)-3-hydroxybutanoyl-CoA = (3R)-3-hydroxybutanoyl-CoA. It catalyses the reaction a (3Z)-enoyl-CoA = a 4-saturated (2E)-enoyl-CoA. The enzyme catalyses a (3E)-enoyl-CoA = a 4-saturated (2E)-enoyl-CoA. The protein operates within lipid metabolism; fatty acid beta-oxidation. In terms of biological role, involved in the aerobic and anaerobic degradation of long-chain fatty acids via beta-oxidation cycle. Catalyzes the formation of 3-oxoacyl-CoA from enoyl-CoA via L-3-hydroxyacyl-CoA. It can also use D-3-hydroxyacyl-CoA and cis-3-enoyl-CoA as substrate. In Escherichia coli O7:K1 (strain IAI39 / ExPEC), this protein is Fatty acid oxidation complex subunit alpha.